The following is a 259-amino-acid chain: Flagellar L-ring protein (259 aa).

A signal peptide spans 1 to 15 (MKRISLIALVTLMSG). Residue Cys-16 is the site of N-palmitoyl cysteine attachment. The S-diacylglycerol cysteine moiety is linked to residue Cys-16.

It belongs to the FlgH family. As to quaternary structure, the basal body constitutes a major portion of the flagellar organelle and consists of four rings (L,P,S, and M) mounted on a central rod.

Its subcellular location is the cell outer membrane. The protein resides in the bacterial flagellum basal body. In terms of biological role, assembles around the rod to form the L-ring and probably protects the motor/basal body from shearing forces during rotation. The sequence is that of Flagellar L-ring protein from Vibrio vulnificus (strain YJ016).